Consider the following 136-residue polypeptide: Type II nicking enzyme V.XorIIP (136 aa).

Belongs to the Vsr family.

Functionally, may nick XorII sequences that contain T/G mispairs resulting from m5C-deamination. If unrepaired, these mismatches can lead to C-to-T transition mutations. The very short patch (VSP) repair process counteracts the mutagenic process by repairing the mismatches in favor of the G-containing strand. This enzyme is an endonuclease that nicks double-stranded DNA within the sequence CGATCG (C-methylation site unknown) next to the thymidine residue that is mismatched to 2'-deoxyguanosine. The incision is mismatch-dependent and strand-specific. The sequence is that of Type II nicking enzyme V.XorIIP from Xanthomonas oryzae pv. oryzae (strain KACC10331 / KXO85).